Here is an 86-residue protein sequence, read N- to C-terminus: Apolipoprotein C-I (86 aa).

Residues 1–26 form the signal peptide; that stretch reads MRLFLSLPVLVVVLLMILEGPGPAQG.

This sequence belongs to the apolipoprotein C1 family.

It localises to the secreted. In terms of biological role, inhibitor of lipoprotein binding to the low density lipoprotein (LDL) receptor, LDL receptor-related protein, and very low density lipoprotein (VLDL) receptor. Associates with high density lipoproteins (HDL) and the triacylglycerol-rich lipoproteins in the plasma and makes up about 10% of the protein of the VLDL and 2% of that of HDL. Appears to interfere directly with fatty acid uptake and is also the major plasma inhibitor of cholesteryl ester transfer protein (CETP). Binds free fatty acids and reduces their intracellular esterification. Modulates the interaction of APOE with beta-migrating VLDL and inhibits binding of beta-VLDL to the LDL receptor-related protein. In Saimiri boliviensis boliviensis (Bolivian squirrel monkey), this protein is Apolipoprotein C-I (APOC1).